Here is an 81-residue protein sequence, read N- to C-terminus: Putative membrane protein insertion efficiency factor (81 aa).

The protein belongs to the UPF0161 family.

The protein resides in the cell inner membrane. Its function is as follows. Could be involved in insertion of integral membrane proteins into the membrane. In Pseudomonas syringae pv. tomato (strain ATCC BAA-871 / DC3000), this protein is Putative membrane protein insertion efficiency factor.